Here is a 474-residue protein sequence, read N- to C-terminus: Nitric oxide reductase subunit B (474 aa).

A helical membrane pass occupies residues 19 to 39; it reads YFVFALILFVGQVLFGLIMGL. H60 contacts heme b. The next 8 helical transmembrane spans lie at 61–81, 95–115, 145–165, 169–189, 207–227, 243–263, 270–290, and 308–328; these read TNLL…YLIP, IILF…YLFV, IGIV…MLKG, VVST…LFAF, HLWV…FVLI, VIIA…FFWI, LWVG…MVLF, and SLWA…WGFM. Residues H207, H258, and H259 each coordinate Fe cation. Residues H347 and H349 each coordinate heme b. The next 3 helical transmembrane spans lie at 348–368, 390–410, and 433–453; these read GHLA…SYAM, FWLM…AGVV, and LAIF…GLVC.

This sequence belongs to the heme-copper respiratory oxidase family. Heterodimer of cytochromes b (large subunit) and c (small subunit).

It localises to the cell membrane. The enzyme catalyses nitrous oxide + 2 Fe(III)-[cytochrome c] + H2O = 2 nitric oxide + 2 Fe(II)-[cytochrome c] + 2 H(+). It functions in the pathway nitrogen metabolism; nitrate reduction (denitrification); dinitrogen from nitrate: step 3/4. Functionally, component of the anaerobic respiratory chain that transforms nitrate to dinitrogen (denitrification). NorB is the catalytic subunit of the enzyme complex. Shows proton pump activity across the membrane in denitrifying bacterial cells. The mononitrogen reduction is probably coupled to electron transport phosphorylation. The chain is Nitric oxide reductase subunit B (norB) from Stutzerimonas stutzeri (Pseudomonas stutzeri).